We begin with the raw amino-acid sequence, 117 residues long: Ig heavy chain V-A2 region K-25 (117 aa).

The residue at position 1 (Q1) is a Pyrrolidone carboxylic acid. Residues 1 to 106 (QSVKESEGGL…GLSYLKSSVD (106 aa)) enclose the Ig-like domain. A disulfide bond links C21 and C91.

The protein is Ig heavy chain V-A2 region K-25 of Oryctolagus cuniculus (Rabbit).